Consider the following 101-residue polypeptide: A-type ATP synthase subunit F (101 aa).

This sequence belongs to the V-ATPase F subunit family. In terms of assembly, has multiple subunits, A(3), B(3), C, D, E, F, G, I and K(x); there may be a few other subunits as well.

The protein resides in the cell membrane. Its function is as follows. Component of the A-type ATP synthase that produces ATP from ADP in the presence of a proton gradient across the membrane. The chain is A-type ATP synthase subunit F from Methanosarcina mazei (strain ATCC BAA-159 / DSM 3647 / Goe1 / Go1 / JCM 11833 / OCM 88) (Methanosarcina frisia).